The chain runs to 425 residues: WD repeat-containing protein JIP5 (425 aa).

WD repeat units follow at residues 9–48 (QLDS…SDDS), 71–110 (RHKG…VTAK), 117–158 (LANG…AKSA), 219–262 (ELLS…DQDE), and 321–358 (LRQE…DVPE). The segment at 354 to 425 (QDVPEDDEDE…HGILHFSGLA (72 aa)) is disordered. 2 stretches are compositionally biased toward acidic residues: residues 356-368 (VPED…EEEA) and 378-396 (SDED…EDDE). The segment covering 399 to 414 (QKRKKRRKGKGGKQAK) has biased composition (basic residues).

It belongs to the WD repeat WDR55 family.

The protein localises to the nucleus. Its subcellular location is the nucleolus. The polypeptide is WD repeat-containing protein JIP5 (JIP5) (Phaeosphaeria nodorum (strain SN15 / ATCC MYA-4574 / FGSC 10173) (Glume blotch fungus)).